The sequence spans 530 residues: Membrane-associated transporter protein (530 aa).

Residues 1-45 lie on the Cytoplasmic side of the membrane; sequence MSGSNGPTDTHTYQSLAEDCPFGSVEQPKRSTGRLVMHSMAMFGR. The helical transmembrane segment at 46–66 threads the bilayer; the sequence is EFCYAVEAAYVTPVLLSVGLP. Over 67-68 the chain is Extracellular; that stretch reads KS. Residues 69–89 form a helical membrane-spanning segment; the sequence is LYSMVWLLSPILGFLLQPVVG. The Cytoplasmic portion of the chain corresponds to 90–105; that stretch reads SASDHCRARWGRRRPY. Residues 106 to 126 traverse the membrane as a helical segment; sequence ILTLAIMMLLGMALYLNGDAV. Over 127-138 the chain is Extracellular; sequence VSALVANPRQKL. A helical transmembrane segment spans residues 139-159; that stretch reads IWAISITMVGVVLFDFSADFI. The Cytoplasmic segment spans residues 160 to 184; the sequence is DGPIKAYLFDVCSHQDKEKGLHYHA. The helical transmembrane segment at 185–205 threads the bilayer; the sequence is LFTGFGGALGYILGAIDWVHL. The Extracellular portion of the chain corresponds to 206-216; sequence DLGRLLGTEFQ. Residues 217 to 237 form a helical membrane-spanning segment; it reads VMFFFSALVLILCFITHLCSI. At 238-318 the chain is on the cytoplasmic side; the sequence is PEAPLRDAAT…ALVNMPSHYR (81 aa). The tract at residues 275-299 is disordered; that stretch reads KNGGADTEQPVQEWKNKKPSGQSQR. Residues 319–339 form a helical membrane-spanning segment; sequence CLCVSHLIGWTAFLSNMLFFT. Residues 340–366 lie on the Extracellular side of the membrane; that stretch reads DFMGQIVYHGDPYGAHNSTEFLIYERG. N-linked (GlcNAc...) asparagine glycosylation is present at Asn-356. A helical membrane pass occupies residues 367–387; sequence VEVGCWGLCINSVFSSVYSYF. Residues 388-398 are Cytoplasmic-facing; it reads QKAMVSYIGLK. Residues 399–419 traverse the membrane as a helical segment; that stretch reads GLYFMGYLLFGLGTGFIGLFP. Residues 420-425 lie on the Extracellular side of the membrane; it reads NVYSTL. A helical membrane pass occupies residues 426-446; sequence VLCSMFGVMSSTLYTVPFNLI. The Cytoplasmic segment spans residues 447 to 477; sequence AEYHREEEKEKGQEAPGGPDNQGRGKGVDCA. The helical transmembrane segment at 478–498 threads the bilayer; sequence ALTCMVQLAQILVGGGLGFLV. At 499–504 the chain is on the extracellular side; sequence NMAGSV. A helical membrane pass occupies residues 505–525; the sequence is VVVVITASAVSLIGCCFVALF. At 526 to 530 the chain is on the cytoplasmic side; sequence VRYVD.

It belongs to the glycoside-pentoside-hexuronide (GPH) cation symporter transporter (TC 2.A.2) family. Interacts with TYRP1. In terms of tissue distribution, mainly expressed in eyeballs and skin melanocytes. Also detected in kidney, colon, gall bladder and pancreas.

The protein resides in the melanosome membrane. It catalyses the reaction sucrose(out) + H(+)(out) = sucrose(in) + H(+)(in). The enzyme catalyses D-glucose(out) + H(+)(out) = D-glucose(in) + H(+)(in). Functionally, proton-associated glucose and sucrose transporter. May be able to transport also fructose. Expressed at a late melanosome maturation stage where functions as a proton/glucose exporter which increase lumenal pH by decreasing glycolysis. Regulates melanogenesis by maintaining melanosome neutralization that is initially initiated by transient OCA2 and required for a proper function of the tyrosinase TYR. The protein is Membrane-associated transporter protein (Slc45a2) of Mus musculus (Mouse).